The sequence spans 507 residues: RNA-splicing ligase RtcB homolog (507 aa).

Mn(2+) contacts are provided by D121, C124, H229, H261, and H355. 228-232 (NHYAE) contributes to the GMP binding site. Residues 355 to 356 (HN), 404 to 407 (GGTM), S411, 430 to 433 (HGAG), and K506 contribute to the GMP site. Residue H430 is the GMP-histidine intermediate of the active site.

This sequence belongs to the RtcB family. As to quaternary structure, catalytic component of the tRNA-splicing ligase complex. It depends on Mn(2+) as a cofactor.

The catalysed reaction is a 3'-end 3'-phospho-ribonucleotide-RNA + a 5'-end dephospho-ribonucleoside-RNA + GTP = a ribonucleotidyl-ribonucleotide-RNA + GMP + diphosphate. It catalyses the reaction a 3'-end 2',3'-cyclophospho-ribonucleotide-RNA + a 5'-end dephospho-ribonucleoside-RNA + GTP + H2O = a ribonucleotidyl-ribonucleotide-RNA + GMP + diphosphate + H(+). In terms of biological role, catalytic subunit of the tRNA-splicing ligase complex that acts by directly joining spliced tRNA halves to mature-sized tRNAs by incorporating the precursor-derived splice junction phosphate into the mature tRNA as a canonical 3',5'-phosphodiester. May act as an RNA ligase with broad substrate specificity, and may function toward other RNAs. The polypeptide is RNA-splicing ligase RtcB homolog (Plasmodium yoelii yoelii).